The primary structure comprises 548 residues: Stretch-activated cation channel MID1 (548 aa).

Positions 1–20 (MIVWQALFVVYCLFTTSIHG) are cleaved as a signal peptide. At 21–341 (LFQDFNPFAN…YLTKKISNGD (321 aa)) the chain is on the extracellular side. 13 N-linked (GlcNAc...) asparagine glycosylation sites follow: N32, N70, N112, N125, N159, N175, N228, N238, N265, N282, N285, N291, and N324. The helical transmembrane segment at 342-358 (GLSSVGGILFSHVYFTT) threads the bilayer. Residues 359 to 548 (RSTDVCSLIF…LMVIHPLDDT (190 aa)) lie on the Cytoplasmic side of the membrane.

Forms an oligomer with a molecular mass of 200 kDa by disulfide bonds. Interacts with CCH1 to form a Ca(2+) influx channel. N-glycosylated.

The protein resides in the cell membrane. In terms of biological role, calcium-permeable, cation-selective stretch-activated channel (SAC) that functions together with CCH1 to mediate calcium entry into cells. Required during mating. Together with CCH1, essential for tolerance to iron stress, which leads to an increased oxidative poise, and to cold stress. The chain is Stretch-activated cation channel MID1 (MID1) from Saccharomyces cerevisiae (strain ATCC 204508 / S288c) (Baker's yeast).